We begin with the raw amino-acid sequence, 186 residues long: uncharacterized protein (186 aa).

Disordered regions lie at residues leucine 17 to phenylalanine 47, glutamate 77 to alanine 105, and glutamine 121 to glycine 164. The segment covering proline 90–alanine 105 has biased composition (low complexity). Residues proline 136 to glutamate 149 are compositionally biased toward acidic residues.

This is an uncharacterized protein from Homo sapiens (Human).